We begin with the raw amino-acid sequence, 538 residues long: MVGSDGDGDGGGGEAHAPAAPAHHHRRPPRPRGGSGAIVEGFAAALRRRIRSGAAAAARASFGGDSGDEAASGEPSSSSSSSPSRRRGGDSNGAEASSAAGGGGGRGGGGDFSAFTFRAAAPVHRKAKESPLSSDAIFKQSHAGLFNLCIVVLVAVNSRLIIENLMKYGLLIRAGFWFNDKSLRDWPLLMCCLSLPAFPLGAFAVEKLAFNNVITDAVATCLHIFLSTTEIVYPVLVILKCDSAVLSGFLLIFIACIVWLKLVSFAHTNHDIRQLTMGGKKVDNELSTVDMDNLQPPTLGNLIYFMMAPTLCYQPSYPRTSCVRKGWLIRQIILYLIFTGLQGFIIEQYINPIVVNSQHPLKGGLLNAVETVLKLSLPNVYLWLCMFYAFFHLWLSILAEILRFGDREFYKDWWNAKTIDEYWRKWNMPVHKWVVRHIYFPCMRNGISKEVAVLISFLVSAVLHEICVAVPCRILKFWAFLGIMLQIPLIVLTAYLKSKFRDTMVGNMIFWFFFCIYGQPMCLLLYYHDVMNRIEKAR.

Disordered regions lie at residues 1 to 39 (MVGSDGDGDGGGGEAHAPAAPAHHHRRPPRPRGGSGAIV) and 54 to 106 (AAAA…GGGR). Over residues 69–83 (EAASGEPSSSSSSSP) the composition is skewed to low complexity. 7 helical membrane-spanning segments follow: residues 136-156 (AIFKQSHAGLFNLCIVVLVAV), 186-206 (WPLLMCCLSLPAFPLGAFAVE), 218-238 (VATCLHIFLSTTEIVYPVLVI), 245-265 (VLSGFLLIFIACIVWLKLVSF), 293-313 (NLQPPTLGNLIYFMMAPTLCY), 326-346 (GWLIRQIILYLIFTGLQGFII), and 382-402 (LWLCMFYAFFHLWLSILAEIL). The FYXDWWN motif motif lies at 409–415 (FYKDWWN). 3 helical membrane-spanning segments follow: residues 451 to 471 (VAVLISFLVSAVLHEICVAVP), 474 to 494 (ILKFWAFLGIMLQIPLIVLTA), and 505 to 525 (VGNMIFWFFFCIYGQPMCLLL). Residue His464 is part of the active site.

The protein belongs to the membrane-bound acyltransferase family. Sterol o-acyltransferase subfamily.

Its subcellular location is the endoplasmic reticulum membrane. The catalysed reaction is an acyl-CoA + a 1,2-diacyl-sn-glycerol = a triacyl-sn-glycerol + CoA. It participates in glycerolipid metabolism; triacylglycerol biosynthesis. In terms of biological role, involved in triacylglycerol (TAG) synthesis. Catalyzes the acylation of the sn-3 hydroxy group of sn-1,2-diacylglycerol using acyl-CoA. The polypeptide is Diacylglycerol O-acyltransferase 1-1 (Oryza sativa subsp. japonica (Rice)).